A 129-amino-acid polypeptide reads, in one-letter code: Succinate dehydrogenase cytochrome b556 subunit (129 aa).

The Cytoplasmic segment spans residues 1-26 (MIRNVKKQRPVNLDLQTIRFPITAIA). Residues 27-52 (SILHRVSGVITFIAVGILLWLLGTSL) traverse the membrane as a helical segment. Residues 53 to 68 (SSPEGFQQAADIMDGF) are Periplasmic-facing. The helical transmembrane segment at 69–89 (IVKFIMWGILTALAYHVIVGI) threads the bilayer. His-84 is a binding site for heme. Residues 90 to 108 (RHMLMDFGYLEETFEAGQR) lie on the Cytoplasmic side of the membrane. A helical transmembrane segment spans residues 109–129 (SAKISFVITVVLSLLAGVLVW).

This sequence belongs to the cytochrome b560 family. Part of an enzyme complex containing four subunits: a flavoprotein, an iron-sulfur protein, plus two membrane-anchoring proteins, SdhC and SdhD. The complex can form homotrimers. The cofactor is heme.

It localises to the cell inner membrane. It functions in the pathway carbohydrate metabolism; tricarboxylic acid cycle. Its function is as follows. Membrane-anchoring subunit of succinate dehydrogenase (SDH). The chain is Succinate dehydrogenase cytochrome b556 subunit (sdhC) from Salmonella typhi.